A 161-amino-acid chain; its full sequence is E3 ubiquitin ligase complex SCF subunit sconC (161 aa).

The segment at I102 to R161 is interaction with the F-box domain of F-box proteins.

Belongs to the SKP1 family. Component of the SCF (SKP1-CUL1-F-box protein) E3 ubiquitin ligase complexes.

It functions in the pathway protein modification; protein ubiquitination. Essential component of the SCF (SKP1-CUL1-F-box protein) E3 ubiquitin ligase complexes, which mediate the ubiquitination and subsequent proteasomal degradation of target proteins. Controls sulfur metabolite repression, probably by mediating the inactivation or degradation of the metR transcription factor. The chain is E3 ubiquitin ligase complex SCF subunit sconC (sconC) from Emericella nidulans (strain FGSC A4 / ATCC 38163 / CBS 112.46 / NRRL 194 / M139) (Aspergillus nidulans).